A 200-amino-acid polypeptide reads, in one-letter code: Pyridoxine/pyridoxamine 5'-phosphate oxidase (200 aa).

FMN is bound by residues 49 to 54, 64 to 65, arginine 70, lysine 71, and glutamine 93; these read RMLLLK and YT. Lysine 54 serves as a coordination point for substrate. Tyrosine 111, arginine 115, and serine 119 together coordinate substrate. FMN contacts are provided by residues 128–129 and tryptophan 173; that span reads QS. 179–181 lines the substrate pocket; it reads RLH. Arginine 183 contributes to the FMN binding site.

Belongs to the pyridoxamine 5'-phosphate oxidase family. In terms of assembly, homodimer. Requires FMN as cofactor.

The catalysed reaction is pyridoxamine 5'-phosphate + O2 + H2O = pyridoxal 5'-phosphate + H2O2 + NH4(+). It carries out the reaction pyridoxine 5'-phosphate + O2 = pyridoxal 5'-phosphate + H2O2. It functions in the pathway cofactor metabolism; pyridoxal 5'-phosphate salvage; pyridoxal 5'-phosphate from pyridoxamine 5'-phosphate: step 1/1. Its pathway is cofactor metabolism; pyridoxal 5'-phosphate salvage; pyridoxal 5'-phosphate from pyridoxine 5'-phosphate: step 1/1. Its function is as follows. Catalyzes the oxidation of either pyridoxine 5'-phosphate (PNP) or pyridoxamine 5'-phosphate (PMP) into pyridoxal 5'-phosphate (PLP). The sequence is that of Pyridoxine/pyridoxamine 5'-phosphate oxidase from Gluconobacter oxydans (strain 621H) (Gluconobacter suboxydans).